Reading from the N-terminus, the 166-residue chain is Urease accessory protein UreE 2 (166 aa).

The segment at 135–154 (EHGAYGGGHHHSRAGEEDFN) is disordered.

The protein belongs to the UreE family.

The protein resides in the cytoplasm. Functionally, involved in urease metallocenter assembly. Binds nickel. Probably functions as a nickel donor during metallocenter assembly. The chain is Urease accessory protein UreE 2 from Pseudomonas syringae pv. syringae (strain B728a).